Here is a 543-residue protein sequence, read N- to C-terminus: Coiled-coil domain-containing protein 9 (543 aa).

Composition is skewed to basic and acidic residues over residues 38 to 47 (IEEDRKKAEL) and 59 to 72 (RSME…EEKS). The tract at residues 38–543 (IEEDRKKAEL…SGEAWPFANA (506 aa)) is disordered. Residue T94 is modified to Phosphothreonine. Omega-N-methylarginine occurs at positions 106, 120, 126, and 128. 3 positions are modified to asymmetric dimethylarginine: R129, R131, and R133. At S135 the chain carries Phosphoserine. Composition is skewed to basic and acidic residues over residues 146 to 183 (TSDR…REGV), 192 to 212 (FLDD…DRRE), and 225 to 239 (DFER…ERQG). A coiled-coil region spans residues 147 to 183 (SDRKSKEWEERRRQNIEKMNEEMEKIAEYERNQREGV). S246 and S253 each carry phosphoserine. 4 stretches are compositionally biased toward basic and acidic residues: residues 256 to 277 (GRER…QERL), 287 to 300 (WRRE…DGMF), 309 to 318 (ELSHRYDDQA), and 359 to 372 (YSDH…REEA). Residues S374 and S384 each carry the phosphoserine modification. The span at 376 to 394 (APESSQSISLEETPTQASE) shows a compositional bias: polar residues. Over residues 405–453 (EDGEEDVGEEEEGEEEGEDEEDEEWEDVSEDVTEEEEEEEEEFEEDEEG) the composition is skewed to acidic residues. A coiled-coil region spans residues 422 to 452 (EDEEDEEWEDVSEDVTEEEEEEEEEFEEDEE). Position 533 is a phosphoserine (S533).

In terms of assembly, probable component of the exon junction complex (EJC); the association is RNA-dependent.

Probable component of the exon junction complex (EJC), a multiprotein complex that associates immediately upstream of the exon-exon junction on mRNAs and serves as a positional landmark for the intron exon structure of genes and directs post-transcriptional processes in the cytoplasm such as mRNA export, nonsense-mediated mRNA decay (NMD) or translation. This is Coiled-coil domain-containing protein 9 (Ccdc9) from Mus musculus (Mouse).